A 118-amino-acid polypeptide reads, in one-letter code: Immunoglobulin heavy variable 4-30-2 (118 aa).

Residues 1–19 form the signal peptide; that stretch reads MKHLWFFLLLVAAPRWVLS. Residues 20 to 44 are framework-1; it reads QLQLQESGSGLVKPSQTLSLTCAVS. The region spanning 20–118 is the Ig-like domain; the sequence is QLQLQESGSG…ADTAVYYCAR (99 aa). Cys41 and Cys116 are disulfide-bonded. The tract at residues 45–54 is complementarity-determining-1; it reads GGSISSGGYS. The framework-2 stretch occupies residues 55-71; it reads WSWIRQPPGKGLEWIGY. The interval 72–78 is complementarity-determining-2; it reads IYHSGST. A framework-3 region spans residues 79–116; it reads YYNPSLKSRVTISVDRSKNQFSLKLSSVTAADTAVYYC. Residues 117 to 118 form a complementarity-determining-3 region; it reads AR.

Immunoglobulins are composed of two identical heavy chains and two identical light chains; disulfide-linked.

The protein localises to the secreted. It localises to the cell membrane. Functionally, v region of the variable domain of immunoglobulin heavy chains that participates in the antigen recognition. Immunoglobulins, also known as antibodies, are membrane-bound or secreted glycoproteins produced by B lymphocytes. In the recognition phase of humoral immunity, the membrane-bound immunoglobulins serve as receptors which, upon binding of a specific antigen, trigger the clonal expansion and differentiation of B lymphocytes into immunoglobulins-secreting plasma cells. Secreted immunoglobulins mediate the effector phase of humoral immunity, which results in the elimination of bound antigens. The antigen binding site is formed by the variable domain of one heavy chain, together with that of its associated light chain. Thus, each immunoglobulin has two antigen binding sites with remarkable affinity for a particular antigen. The variable domains are assembled by a process called V-(D)-J rearrangement and can then be subjected to somatic hypermutations which, after exposure to antigen and selection, allow affinity maturation for a particular antigen. This chain is Immunoglobulin heavy variable 4-30-2, found in Homo sapiens (Human).